The following is a 237-amino-acid chain: tRNA (guanine-N(7)-)-methyltransferase (237 aa).

Positions 67, 92, 119, and 141 each coordinate S-adenosyl-L-methionine. The active site involves D141. Residues K145, D177, and 214-217 each bind substrate; that span reads TRYE.

This sequence belongs to the class I-like SAM-binding methyltransferase superfamily. TrmB family.

It carries out the reaction guanosine(46) in tRNA + S-adenosyl-L-methionine = N(7)-methylguanosine(46) in tRNA + S-adenosyl-L-homocysteine. It participates in tRNA modification; N(7)-methylguanine-tRNA biosynthesis. Functionally, catalyzes the formation of N(7)-methylguanine at position 46 (m7G46) in tRNA. The polypeptide is tRNA (guanine-N(7)-)-methyltransferase (Jannaschia sp. (strain CCS1)).